A 454-amino-acid chain; its full sequence is Cathepsin C (454 aa).

The first 20 residues, 1–20 (MHWVFHCILIILACLRFTCA), serve as a signal peptide directing secretion. Positions 21 to 217 (DTPANCTYED…SKELISLTGN (197 aa)) are excised as a propeptide. A glycan (N-linked (GlcNAc...) asparagine) is linked at asparagine 25. 3 cysteine pairs are disulfide-bonded: cysteine 26–cysteine 107, cysteine 244–cysteine 287, and cysteine 280–cysteine 321. Cysteine 247 is a catalytic residue. Asparagine 265 carries N-linked (GlcNAc...) asparagine glycosylation. Phenylalanine 291 serves as a coordination point for chloride. Asparagine 326 is a glycosylation site (N-linked (GlcNAc...) asparagine). Tyrosine 337 lines the chloride pocket. Residues histidine 398 and asparagine 420 contribute to the active site.

Belongs to the peptidase C1 family. Chloride serves as cofactor.

It localises to the lysosome. Its function is as follows. Thiol protease. Has a role as a digestive enzyme. This chain is Cathepsin C, found in Schistosoma mansoni (Blood fluke).